We begin with the raw amino-acid sequence, 110 residues long: Large ribosomal subunit protein uL22 (110 aa).

Belongs to the universal ribosomal protein uL22 family. As to quaternary structure, part of the 50S ribosomal subunit.

This protein binds specifically to 23S rRNA; its binding is stimulated by other ribosomal proteins, e.g. L4, L17, and L20. It is important during the early stages of 50S assembly. It makes multiple contacts with different domains of the 23S rRNA in the assembled 50S subunit and ribosome. Functionally, the globular domain of the protein is located near the polypeptide exit tunnel on the outside of the subunit, while an extended beta-hairpin is found that lines the wall of the exit tunnel in the center of the 70S ribosome. The polypeptide is Large ribosomal subunit protein uL22 (Exiguobacterium sp. (strain ATCC BAA-1283 / AT1b)).